The primary structure comprises 177 residues: Large ribosomal subunit protein uL6 (177 aa).

It belongs to the universal ribosomal protein uL6 family. Part of the 50S ribosomal subunit.

In terms of biological role, this protein binds to the 23S rRNA, and is important in its secondary structure. It is located near the subunit interface in the base of the L7/L12 stalk, and near the tRNA binding site of the peptidyltransferase center. The chain is Large ribosomal subunit protein uL6 from Cellvibrio japonicus (strain Ueda107) (Pseudomonas fluorescens subsp. cellulosa).